The following is a 56-amino-acid chain: Alpha-conotoxin TxIA (56 aa).

An N-terminal signal peptide occupies residues 1 to 16 (MFTVFLLVVLATAVVS). The propeptide occupies 17–39 (FTSDRASDDGKAAASDLITLTIK). 2 cysteine pairs are disulfide-bonded: Cys-41-Cys-47 and Cys-42-Cys-55. A ser-Xaa-Pro motif, crucial for potent interaction with nAChR region spans residues 43–45 (SRP). 2 positions are modified to 4-hydroxyproline; partial: Pro-45 and Pro-46. Cys-55 bears the Cysteine amide mark.

The protein belongs to the conotoxin A superfamily. In terms of processing, exists in 4 different forms, depending on hydroxylations. Tx1a-PP does not contain hydroxyproline, tx1a-OP has one hydroxyproline at position 45, tx1a-PO has one hydroxyproline at position 46, and tx1a-PP has two hydroxyprolines at positions 45 and 46. In terms of tissue distribution, expressed by the venom duct. Tx1a that containing 1 or 2 non-hydroxylated prolines are mostly present in part 5 of the venom duct (distal part near the pharynx), whereas tx1a-OO (with 2 hydroxyprolines) is mostly present in part 4 of the venom duct (follewed by part 3).

The protein resides in the secreted. Its function is as follows. Alpha-conotoxins act on postsynaptic membranes, they bind to the nicotinic acetylcholine receptors (nAChR) and thus inhibit them. This toxin inhibits rat alpha-3-beta-2/CHRNA3-CHRNB2 (IC(50)=3.5 nM), rat alpha-7/CHRNA7 (IC(50)=392 nM) nAChR, and the L.stagnalis soluble acetylcholine receptor (all tested without hydroxyproline). The protein is Alpha-conotoxin TxIA of Conus textile (Cloth-of-gold cone).